The chain runs to 411 residues: Putative nickel insertion protein (411 aa).

Belongs to the LarC family.

This Acaryochloris marina (strain MBIC 11017) protein is Putative nickel insertion protein.